Consider the following 246-residue polypeptide: Proteasome subunit alpha type-5 (246 aa).

It belongs to the peptidase T1A family. As to quaternary structure, the 26S proteasome consists of a 20S proteasome core and two 19S regulatory subunits. The 20S proteasome core is composed of 28 subunits that are arranged in four stacked rings, resulting in a barrel-shaped structure. The two end rings are each formed by seven alpha subunits, and the two central rings are each formed by seven beta subunits. The catalytic chamber with the active sites is on the inside of the barrel.

The protein resides in the cytoplasm. Its subcellular location is the nucleus. In terms of biological role, the proteasome is a multicatalytic proteinase complex which is characterized by its ability to cleave peptides with Arg, Phe, Tyr, Leu, and Glu adjacent to the leaving group at neutral or slightly basic pH. The proteasome has an ATP-dependent proteolytic activity. The sequence is that of Proteasome subunit alpha type-5 from Trypanosoma brucei brucei.